The chain runs to 315 residues: MADEIGFFQLNTGAKIPSVGLGTWQAAPGVVGDAVAAAVKIGYQHIDCASRYGNEIEIGKVLKKLFDDGVVKREKLFITSKIWLTDLDPPDVQDALNRTLQDLQLDYVDLYLMHWPVRLKKGTVDFKPENIMPIDIPSTWKAMEALVDSGKARAIGVSNFSTKKLSDLVEAARVPPAVNQVECHPSWQQHKLHEFCKSKGIHLSGYSPLGSPGTTWVKADVLKSPVIEMIAKEIGKSPAQTALRWGLQMGHSILPKSTNEGRIRENFDVLGWSIPKEMFDKFSKIEQARLVQGTSFVHETLSPYKTLEELWDGEI.

N-acetylalanine is present on Ala-2. Residues 23-24 (TW) and Asp-47 contribute to the NADP(+) site. The active-site Proton donor is Tyr-52. NADP(+) contacts are provided by residues His-114, 158 to 159 (SN), Gln-180, 207 to 213 (SPLGSPG), 256 to 258 (KST), and 262 to 266 (RIREN). Ser-295 bears the Phosphoserine mark.

Belongs to the aldo/keto reductase family.

Oxidoreductase that may act on a broad range of substrates such as ketosteroids, aldehydes, ketones and sugars. The chain is Aldo-keto reductase family 4 member C11 (AKR4C11) from Arabidopsis thaliana (Mouse-ear cress).